A 364-amino-acid chain; its full sequence is Developmentally-regulated GTP-binding protein 2 homolog (364 aa).

The OBG-type G domain maps to 63 to 288 (ARVALIGFPS…LLDKIWDYLN (226 aa)). GTP-binding positions include 69–76 (GFPSVGKS), 115–119 (DTPGI), and 246–249 (NKMD). The TGS domain occupies 288-363 (NLVRVYTKLR…EDEDVIQIVK (76 aa)).

This sequence belongs to the TRAFAC class OBG-HflX-like GTPase superfamily. OBG GTPase family.

The polypeptide is Developmentally-regulated GTP-binding protein 2 homolog (drg2) (Dictyostelium discoideum (Social amoeba)).